A 367-amino-acid chain; its full sequence is MASEICKTISVARLEKHKNLFLNYRNLHHFPLELLKDEGLQHLERLYMKRNSLTTLPENLAQKLPNLVELYLHSNNIVVVPEAIGSLVKLQCLDLSDNALEIVCPEIGGLRALRHLRLANNQLQFLPPEVGDLKELQTLDISSNRLLALPERLHLCLSLQYLTVDRNRLCCVPRHLCQLPSLNELSMAGNHLASLPIDLGRSRELQYVYVDNNIQLKGLPSYLYNKVIGCNGCGIPIQLSEVRLLTFSSGQLTVFLPAEVKTIGTEKDHVLPLQELTMRSLYRTYHGLWKDLNFLSPISLPRSLLELLHCPLGHCHLCSEPMFTFVYPKIFPLRETPMAGLHQRRTSIGFVAYCCSTQCLRTFNLLC.

LRR repeat units lie at residues 16-36 (KHKN…ELLK), 42-63 (HLER…LAQK), 66-87 (NLVE…IGSL), 89-111 (KLQC…GGLR), 112-133 (ALRH…VGDL), 135-156 (ELQT…LHLC), 158-180 (SLQY…CQLP), 181-202 (SLNE…LGRS), and 204-226 (ELQY…LYNK).

The polypeptide is Leucine-rich repeat-containing protein 28 (Lrrc28) (Mus musculus (Mouse)).